Reading from the N-terminus, the 103-residue chain is Transcription factor S (103 aa).

Cys4, Cys7, Cys20, Cys23, Cys64, Cys67, Cys92, and Cys95 together coordinate Zn(2+). The C4-type zinc-finger motif lies at 4 to 23 (CPKCKSLMIYQGDKLVCRKC). Residues 60 to 100 (TKAICPACGHNEAFWWLRQLRAADESEVRFFRCTKCGKTWR) form a TFIIS-type zinc finger.

The protein belongs to the archaeal RpoM/eukaryotic RPA12/RPB9/RPC11 RNA polymerase family.

Its function is as follows. Induces RNA cleavage activity in the RNA polymerase. In its presence, the cleavage activity of the RNA polymerase truncates the RNA back to position +15 in a stepwise manner by releasing mainly dinucleotides from the 3'-end of the nascent RNA. The truncated RNAs are able to continue elongation. Involved in transcriptional proofreading and fidelity. Misincorporation of nucleotides during elongation of transcription leads to arrested elongation complexes which are rescued by TFS-promoted removal of a dinucleotide from the 3'-end. TFS is able to induce a cleavage resynthesis cycle in stalled elongation complexes (resulting from the next missing nucleotide or a reduced incorporation rate of a wrong nucleotide) preventing misincorporation and enabling proofreading in a post-incorporation manner. Pausing of elongation complexes is the main determinant of TFS-induced RNA cleavage. The chain is Transcription factor S from Archaeoglobus fulgidus (strain ATCC 49558 / DSM 4304 / JCM 9628 / NBRC 100126 / VC-16).